A 339-amino-acid chain; its full sequence is Anthranilate phosphoribosyltransferase (339 aa).

Residues Gly-81, Gly-84 to Asp-85, Thr-89, Asn-91 to Thr-94, Lys-109 to Ser-117, and Ala-121 each bind 5-phospho-alpha-D-ribose 1-diphosphate. Gly-81 contributes to the anthranilate binding site. Residue Ser-93 participates in Mg(2+) binding. An anthranilate-binding site is contributed by Asn-112. Residue Arg-167 participates in anthranilate binding. Positions 226 and 227 each coordinate Mg(2+).

Belongs to the anthranilate phosphoribosyltransferase family. Homodimer. The cofactor is Mg(2+).

It catalyses the reaction N-(5-phospho-beta-D-ribosyl)anthranilate + diphosphate = 5-phospho-alpha-D-ribose 1-diphosphate + anthranilate. It participates in amino-acid biosynthesis; L-tryptophan biosynthesis; L-tryptophan from chorismate: step 2/5. Functionally, catalyzes the transfer of the phosphoribosyl group of 5-phosphorylribose-1-pyrophosphate (PRPP) to anthranilate to yield N-(5'-phosphoribosyl)-anthranilate (PRA). This is Anthranilate phosphoribosyltransferase from Roseobacter denitrificans (strain ATCC 33942 / OCh 114) (Erythrobacter sp. (strain OCh 114)).